The chain runs to 137 residues: Small ribosomal subunit protein uS9 (137 aa).

Residues proline 104–arginine 137 are disordered. The span at lysine 118 to arginine 137 shows a compositional bias: basic residues.

Belongs to the universal ribosomal protein uS9 family.

This Gloeothece citriformis (strain PCC 7424) (Cyanothece sp. (strain PCC 7424)) protein is Small ribosomal subunit protein uS9.